Reading from the N-terminus, the 327-residue chain is Gonadotropin-releasing hormone receptor (327 aa).

Residues 1-38 (MANNASLEQDPNHCSAINNSIPLIQGKLPTLTVSGKIR) lie on the Extracellular side of the membrane. N4 and N18 each carry an N-linked (GlcNAc...) asparagine glycan. A helical transmembrane segment spans residues 39–58 (VTVTFFLFLLSTAFNASFLL). Residues 59-77 (KLQKWTQKRKKGKKLSRMK) lie on the Cytoplasmic side of the membrane. A helical transmembrane segment spans residues 78-97 (VLLKHLTLANLLETLIVMPL). At 98 to 115 (DGMWNITVQWYAGEFLCK) the chain is on the extracellular side. N-linked (GlcNAc...) asparagine glycosylation occurs at N102. A disulfide bridge connects residues C114 and C195. The helical transmembrane segment at 116–137 (VLSYLKLFSMYAPAFMMVVISL) threads the bilayer. Topologically, residues 138–164 (DRSLAITQPLAVQSNSKLEQSMISLAW) are cytoplasmic. A helical membrane pass occupies residues 165–184 (ILSIVFAGPQLYIFRMIYLA). The Extracellular portion of the chain corresponds to 185–211 (DGSGPTVFSQCVTHCSFPQWWHQAFYN). A helical membrane pass occupies residues 212–231 (FFTFGCLFIIPLLIMLICNA). The Cytoplasmic segment spans residues 232–280 (KIIFALTRVLHQDPRKLQLNQSKNNIPRARLRTLKMTVAFATSFVVCWT). A helical transmembrane segment spans residues 281 to 299 (PYYVLGIWYWFDPEMLNRV). At 300–305 (SEPVNH) the chain is on the extracellular side. Residues 306 to 325 (FFFLFAFLNPCFDPLIYGYF) traverse the membrane as a helical segment. Residues 326–327 (SL) lie on the Cytoplasmic side of the membrane.

This sequence belongs to the G-protein coupled receptor 1 family. As to expression, pituitary gland.

Its subcellular location is the cell membrane. Receptor for gonadotropin releasing hormone (GnRH) that mediates the action of GnRH to stimulate the secretion of the gonadotropic hormones luteinizing hormone (LH) and follicle-stimulating hormone (FSH). This receptor mediates its action by association with G-proteins that activate a phosphatidylinositol-calcium second messenger system. This chain is Gonadotropin-releasing hormone receptor (Gnrhr), found in Mus musculus (Mouse).